We begin with the raw amino-acid sequence, 353 residues long: tRNA-specific 2-thiouridylase MnmA 2 (353 aa).

6 to 13 is a binding site for ATP; that stretch reads LLSGGVDS. The tract at residues 92 to 94 is interaction with target base in tRNA; the sequence is NPD. The active-site Nucleophile is the cysteine 97. Cysteine 97 and cysteine 192 are disulfide-bonded. Glycine 120 lines the ATP pocket. The interval 142–144 is interaction with tRNA; it reads KDQ. The active-site Cysteine persulfide intermediate is the cysteine 192.

The protein belongs to the MnmA/TRMU family.

It is found in the cytoplasm. It carries out the reaction S-sulfanyl-L-cysteinyl-[protein] + uridine(34) in tRNA + AH2 + ATP = 2-thiouridine(34) in tRNA + L-cysteinyl-[protein] + A + AMP + diphosphate + H(+). In terms of biological role, catalyzes the 2-thiolation of uridine at the wobble position (U34) of tRNA, leading to the formation of s(2)U34. The polypeptide is tRNA-specific 2-thiouridylase MnmA 2 (Bacteroides fragilis (strain ATCC 25285 / DSM 2151 / CCUG 4856 / JCM 11019 / LMG 10263 / NCTC 9343 / Onslow / VPI 2553 / EN-2)).